Reading from the N-terminus, the 320-residue chain is MKDTFQRSINYMRISITDLCNLRCQYCMPEKGIYKKTHQDILTLEEIEQIVRIGAENGINKVRITGGEPLVRKGVIGLIKNISNIPGIQDIALTTNGLLIKKYGEALKDAGLKRINISIDSLRPDRYKEITRGGDLSQVLEGIQEALRLGMTPVKLNVVVIGGYNEDEIEDFANLTVDDPIDVRFIELMPIGEASGWAKDRFLSNEEVKSKIEGLVPIITDATSPARLYRLPGAKGRVGFINPISSHFCESCNRIRVTSDGKLKPCLHSNHEIDLLRVARENPEQIGAVLSNGIQLKPEKHYLYTNKHEMSARSMSEIGG.

Positions threonine 4–alanine 226 constitute a Radical SAM core domain. Arginine 13 serves as a coordination point for GTP. [4Fe-4S] cluster-binding residues include cysteine 20 and cysteine 24. Tyrosine 26 serves as a coordination point for S-adenosyl-L-methionine. Cysteine 27 is a [4Fe-4S] cluster binding site. Arginine 63 lines the GTP pocket. Glycine 67 lines the S-adenosyl-L-methionine pocket. GTP is bound at residue threonine 94. Serine 118 contributes to the S-adenosyl-L-methionine binding site. Lysine 155 provides a ligand contact to GTP. Methionine 189 provides a ligand contact to S-adenosyl-L-methionine. Cysteine 249 and cysteine 252 together coordinate [4Fe-4S] cluster. Arginine 254–arginine 256 serves as a coordination point for GTP. Position 266 (cysteine 266) interacts with [4Fe-4S] cluster.

Belongs to the radical SAM superfamily. MoaA family. Monomer and homodimer. The cofactor is [4Fe-4S] cluster.

It carries out the reaction GTP + AH2 + S-adenosyl-L-methionine = (8S)-3',8-cyclo-7,8-dihydroguanosine 5'-triphosphate + 5'-deoxyadenosine + L-methionine + A + H(+). Its pathway is cofactor biosynthesis; molybdopterin biosynthesis. Catalyzes the cyclization of GTP to (8S)-3',8-cyclo-7,8-dihydroguanosine 5'-triphosphate. This chain is GTP 3',8-cyclase, found in Alkaliphilus metalliredigens (strain QYMF).